The following is a 143-amino-acid chain: Flagellar assembly factor FliW (143 aa).

It belongs to the FliW family. Interacts with translational regulator CsrA and flagellin(s).

It localises to the cytoplasm. Functionally, acts as an anti-CsrA protein, binds CsrA and prevents it from repressing translation of its target genes, one of which is flagellin. Binds to flagellin and participates in the assembly of the flagellum. The sequence is that of Flagellar assembly factor FliW from Clostridium botulinum (strain Langeland / NCTC 10281 / Type F).